A 276-amino-acid polypeptide reads, in one-letter code: 4-deoxy-L-threo-5-hexosulose-uronate ketol-isomerase 2 (276 aa).

Zn(2+)-binding residues include His194, His196, Glu201, and His243.

This sequence belongs to the KduI family. Zn(2+) is required as a cofactor.

The catalysed reaction is 5-dehydro-4-deoxy-D-glucuronate = 3-deoxy-D-glycero-2,5-hexodiulosonate. It participates in glycan metabolism; pectin degradation; 2-dehydro-3-deoxy-D-gluconate from pectin: step 4/5. In terms of biological role, catalyzes the isomerization of 5-dehydro-4-deoxy-D-glucuronate to 3-deoxy-D-glycero-2,5-hexodiulosonate. The sequence is that of 4-deoxy-L-threo-5-hexosulose-uronate ketol-isomerase 2 (kduI2) from Enterococcus faecalis (strain ATCC 700802 / V583).